The chain runs to 288 residues: 4-hydroxybenzoate octaprenyltransferase (288 aa).

7 helical membrane-spanning segments follow: residues 38 to 58 (IAAQ…GVFL), 98 to 120 (ILFA…MTIW), 141 to 161 (LLQV…FSAV), 163 to 183 (ESLP…SVIY), 213 to 233 (LIIG…GSLA), 238 to 258 (VYYI…KLMV), and 268 to 288 (AFLN…LSYL).

This sequence belongs to the UbiA prenyltransferase family. Mg(2+) is required as a cofactor.

It localises to the cell inner membrane. It catalyses the reaction all-trans-octaprenyl diphosphate + 4-hydroxybenzoate = 4-hydroxy-3-(all-trans-octaprenyl)benzoate + diphosphate. Its pathway is cofactor biosynthesis; ubiquinone biosynthesis. Catalyzes the prenylation of para-hydroxybenzoate (PHB) with an all-trans polyprenyl group. Mediates the second step in the final reaction sequence of ubiquinone-8 (UQ-8) biosynthesis, which is the condensation of the polyisoprenoid side chain with PHB, generating the first membrane-bound Q intermediate 3-octaprenyl-4-hydroxybenzoate. The protein is 4-hydroxybenzoate octaprenyltransferase of Providencia stuartii.